A 723-amino-acid chain; its full sequence is MAEEEGPPVELRQRKKPKSSENKESAKEEKISDIPIPERAPKHVLFQRFAKIFIGCLAAVTSGMMYALYLSAYHERKFWFSNRQELEREITFQGDSAIYYSYYKDMLKAPSFERGVYELTHNNKTVSLKTINAVQQMSLYPELIASILYQATGSNEIIEPVYFYIGIVFGLQGIYVTALFVTSWLMSGTWLAGMLTVAWFVINRVDTTRIEYSIPLRENWALPYFACQIAALTGYLKSNLNTYGERFCYLLMSASTYTFMMMWEYSHYLLFLQAISLFLLDTFSVEQSDKVYEVYKIYIFSLFLGYLLQFENPALLVSPLLSLVAALMLAKCLQLNVKKGSFVAKIIKVINFYLVCTLTITLNIIMKMFVPHKENGHMLKFLEVKFGLNMTKNFTMNWLLCQESLQAPSQDFFLRLTQSSLLPFYILVLIICFLSMLQVIFRRINGKSLKETVTLEDGRIGERPEIIYHVIHTILLGSLAMVIEGLKYIWIPYVCMLAAFGVCSPELWMTLFKWLRLRTVHPILLALILSMAVPTIIGLSLWKEFFPRLMTELMELQEFYDPDTVELMTWIKRQAPVAAVFAGSPQLMGAIKLCTGWMVTSLPLYNDDDLLKRNENIYQIYSKRSAEDIYKILTSYKANYLIVEDAICNEVGPMRGCRVKDLLDIANGHMVCEEGDKLTYSKYGRFCHEVKINYSPYVNYFTRVYWNRSYFVYKINTVISFQS.

A disordered region spans residues 1–33 (MAEEEGPPVELRQRKKPKSSENKESAKEEKISD). Alanine 2 carries the N-acetylalanine modification. The span at 18–32 (KSSENKESAKEEKIS) shows a compositional bias: basic and acidic residues. A run of 12 helical transmembrane segments spans residues 52–72 (IFIG…YLSA), 161–178 (VYFY…YVTA), 184–202 (WLMS…WFVI), 222–240 (LPYF…KSNL), 260–280 (MMMW…LFLL), 292–310 (YEVY…LLQF), 316–337 (LVSP…QLNV), 349–370 (VINF…KMFV), 421–441 (LLPF…QVIF), 466–486 (IIYH…IEGL), 489–509 (IWIP…ELWM), and 522–542 (PILL…LSLW).

This sequence belongs to the dpy-19 family. In terms of tissue distribution, widely expressed.

It localises to the membrane. Probable C-mannosyltransferase that mediates C-mannosylation of tryptophan residues on target proteins. In Homo sapiens (Human), this protein is Probable C-mannosyltransferase DPY19L4 (DPY19L4).